We begin with the raw amino-acid sequence, 615 residues long: NEDD8 ultimate buster 1 (615 aa).

Coiled coils occupy residues 36 to 70 (LALKDLAKQYSDRLECCENEVEKVIEEIRCKAIER) and 152 to 203 (KAMV…AAET). UBA domains lie at 374 to 413 (YIDPSKVDNLLQLGFTAQEARLGLRACDGNVDHAATHITN), 424 to 470 (EEKE…LLSN), and 489 to 529 (SPSQ…LAHN). A Nuclear localization signal motif is present at residues 414–431 (RREELAQIRKEEKEKKRR). An NEDD8-binding 1 region spans residues 427–474 (EKKRRRLENIRFLKGMGYSTHAAQQVLHAASGNLDEALKILLSNPQMW). Residues 532-586 (SLPPELPLSPEDSLSPPATSPSDSAGTSSASTDEDMETEAVNEILEDIPEHEEDY) form a disordered region. Residues 539-562 (LSPEDSLSPPATSPSDSAGTSSAS) show a composition bias toward low complexity. Residues 550–598 (TSPSDSAGTSSASTDEDMETEAVNEILEDIPEHEEDYLDSTLEDEEIII) are NEDD8-binding 2. Residues 563 to 586 (TDEDMETEAVNEILEDIPEHEEDY) show a composition bias toward acidic residues.

Directly interacts with NEDD8 and PSMD4/S5a, a member of the regulatory subunit of the 26S proteasome. Isoform 1 binds to NEDD8 more efficiently than isoform 2. Interacts with AIPL1. The interaction with UBD via UBA domains facilitates the linking of UBD-conjugated target protein to the proteasome complex and accelerates UBD degradation and that of its conjugates. In terms of tissue distribution, widely expressed with lowest expression in the pancreas for isoform 1 and in leukocytes, liver, prostate and skeletal muscle for isoform 2.

It localises to the nucleus. Its function is as follows. Specific down-regulator of the NEDD8 conjugation system. Recruits NEDD8, UBD, and their conjugates to the proteasome for degradation. Isoform 1 promotes the degradation of NEDD8 more efficiently than isoform 2. The chain is NEDD8 ultimate buster 1 (NUB1) from Homo sapiens (Human).